An 86-amino-acid chain; its full sequence is Large ribosomal subunit protein bL27 (86 aa).

Positions 1–26 (MATKKAGGSSRNGRDSAGRRLGVKKS) are disordered.

It belongs to the bacterial ribosomal protein bL27 family.

The sequence is that of Large ribosomal subunit protein bL27 from Rickettsia akari (strain Hartford).